A 182-amino-acid chain; its full sequence is Adenine phosphoribosyltransferase (182 aa).

This sequence belongs to the purine/pyrimidine phosphoribosyltransferase family. Homodimer.

The protein resides in the cytoplasm. It catalyses the reaction AMP + diphosphate = 5-phospho-alpha-D-ribose 1-diphosphate + adenine. Its pathway is purine metabolism; AMP biosynthesis via salvage pathway; AMP from adenine: step 1/1. Its function is as follows. Catalyzes a salvage reaction resulting in the formation of AMP, that is energically less costly than de novo synthesis. The chain is Adenine phosphoribosyltransferase from Pseudomonas paraeruginosa (strain DSM 24068 / PA7) (Pseudomonas aeruginosa (strain PA7)).